An 824-amino-acid polypeptide reads, in one-letter code: MSISSLFGGRYDNKFLLNMSSAPKIELIVDKVASLSERRLEGRLPEDWFRHIMDPETEFNSEFADALCIGIDEFAQPLPFLPFKALLVTGTAGAGKTNSIQTLAANLDCIVTATTSIAAQNLSVVLNRSKSAQVKTIFKTFGFNSSHVSMSERQSYIANDERSIQIQQKQDLSIYWNVISDIADRALGAVACKTKELPDLCESSVIVIDEAGVILRHILHTVVFFYWFYNALYKTPLYEDGIVPCIVCVGSPTQSNALVTSFNPLTQNKDVKRGIDVLSALICDDVLSKYCEVDNNWIIFVNNKRCADHAFGDFLKHIEFGLPLKPELIEYVDQFVKPASYIRNPMNEIETTRLFLSHNEVKNYFRSLHEQVEVTNRNNLFVFPVYFLIKNKTFEDYKSEIGNFSLEIEPWFKSNIHRLNTYSQFADQDLSKTVQLEEIVLEDGSVEETLITCHLKHIRNSSIGVTSKIKASTVGFSGTYEKFVELLQSDLFIEKTSCDQTIHAYSFLSGLMFGGMYSFCCSKFTTPEVLMEIKNIKMPSIEFLESEMSRMSPDVQTVETDERYDFGLVNDGLSDVDLLEIDPCGDPFFTRYSKLPLTNSLSFEEISLLYTTFKDIFISRFAILQKHTKGKFGKTLLVTYNRNNVSRKQCGEIYSHLKSFYGMLTYAIPANNYTLEGYTNDNVVHLGTDKQLPQILYKKGLPRLVIKDEMGFISVLDNNVSKFIDVVNGQSFHLCTTVDYATVSKVSMTITKSQGLSIQKVAIDFGSDPKNLKLSSIYVGMSRVTDPNNLIMNVNPLRLNYENDNFIAPHIVKALKNENTMLIF.

90–97 (GTAGAGKT) lines the ATP pocket.

The protein belongs to the herpesviridae helicase family. Associates with the primase and the primase-associated factor to form the helicase-primase complex.

It is found in the host nucleus. In terms of biological role, component of the helicase/primase complex. Unwinds the DNA at the replication forks and generates single-stranded DNA for both leading and lagging strand synthesis. The primase synthesizes short RNA primers on the lagging strand that the polymerase elongates using dNTPs. Possesses helicase-like motifs and therefore may act as the helicase subunit of the complex. In Human herpesvirus 6A (strain Uganda-1102) (HHV-6 variant A), this protein is DNA replication helicase.